A 238-amino-acid polypeptide reads, in one-letter code: UPF0280 protein Msm_0088 (238 aa).

Belongs to the UPF0280 family.

In Methanobrevibacter smithii (strain ATCC 35061 / DSM 861 / OCM 144 / PS), this protein is UPF0280 protein Msm_0088.